The chain runs to 109 residues: Mitochondrial pyruvate carrier 2 (109 aa).

3 helical membrane passes run 19–35 (IHFW…IANI), 51–67 (IAVT…STII), and 74–90 (LFSV…YQLT).

Belongs to the mitochondrial pyruvate carrier (MPC) (TC 2.A.105) family.

It is found in the mitochondrion inner membrane. Its function is as follows. Mediates the uptake of pyruvate into mitochondria. The polypeptide is Mitochondrial pyruvate carrier 2 (Arabidopsis thaliana (Mouse-ear cress)).